The chain runs to 656 residues: Putative L-type lectin-domain containing receptor kinase V.2 (656 aa).

Residues methionine 1–cysteine 23 form the signal peptide. The Extracellular segment spans residues serine 24–lysine 276. Residues glycine 29–asparagine 248 are legume-lectin like. N-linked (GlcNAc...) asparagine glycans are attached at residues asparagine 78, asparagine 124, asparagine 159, asparagine 190, and asparagine 257. A helical membrane pass occupies residues isoleucine 277 to valine 297. The Cytoplasmic portion of the chain corresponds to methionine 298 to arginine 656. The region spanning phenylalanine 334–leucine 615 is the Protein kinase domain. ATP contacts are provided by residues leucine 340 to valine 348 and lysine 363. Catalysis depends on aspartate 459, which acts as the Proton acceptor.

This sequence in the C-terminal section; belongs to the protein kinase superfamily. Ser/Thr protein kinase family. The protein in the N-terminal section; belongs to the leguminous lectin family.

It localises to the cell membrane. It carries out the reaction L-seryl-[protein] + ATP = O-phospho-L-seryl-[protein] + ADP + H(+). The enzyme catalyses L-threonyl-[protein] + ATP = O-phospho-L-threonyl-[protein] + ADP + H(+). In Arabidopsis thaliana (Mouse-ear cress), this protein is Putative L-type lectin-domain containing receptor kinase V.2 (LECRK52).